Consider the following 199-residue polypeptide: Recombination protein RecR (199 aa).

Residues 57-72 (CSICGNITEGDPCSIC) form a C4-type zinc finger. The Toprim domain occupies 80–176 (THVLVVEQPK…KVTRLAHGLS (97 aa)).

Belongs to the RecR family.

May play a role in DNA repair. It seems to be involved in an RecBC-independent recombinational process of DNA repair. It may act with RecF and RecO. The sequence is that of Recombination protein RecR from Levilactobacillus brevis (strain ATCC 367 / BCRC 12310 / CIP 105137 / JCM 1170 / LMG 11437 / NCIMB 947 / NCTC 947) (Lactobacillus brevis).